Consider the following 252-residue polypeptide: Probable transcriptional regulatory protein RT0442 (252 aa).

Positions 1–22 are disordered; that stretch reads MSGHSKFKNIQHRKGAQDKKKS.

This sequence belongs to the TACO1 family.

The protein resides in the cytoplasm. This chain is Probable transcriptional regulatory protein RT0442, found in Rickettsia typhi (strain ATCC VR-144 / Wilmington).